Reading from the N-terminus, the 226-residue chain is Octanoyltransferase (226 aa).

Residues 37–220 form the BPL/LPL catalytic domain; sequence GTAGELIWLL…SFSKVFGPVE (184 aa). Substrate-binding positions include 76–83, 151–153, and 164–166; these read RGGQFTYH, AIG, and GIS. The active-site Acyl-thioester intermediate is the Cys-182.

This sequence belongs to the LipB family.

Its subcellular location is the cytoplasm. It catalyses the reaction octanoyl-[ACP] + L-lysyl-[protein] = N(6)-octanoyl-L-lysyl-[protein] + holo-[ACP] + H(+). The protein operates within protein modification; protein lipoylation via endogenous pathway; protein N(6)-(lipoyl)lysine from octanoyl-[acyl-carrier-protein]: step 1/2. Functionally, catalyzes the transfer of endogenously produced octanoic acid from octanoyl-acyl-carrier-protein onto the lipoyl domains of lipoate-dependent enzymes. Lipoyl-ACP can also act as a substrate although octanoyl-ACP is likely to be the physiological substrate. This chain is Octanoyltransferase, found in Caulobacter vibrioides (strain ATCC 19089 / CIP 103742 / CB 15) (Caulobacter crescentus).